We begin with the raw amino-acid sequence, 257 residues long: Imidazole glycerol phosphate synthase subunit HisF (257 aa).

Active-site residues include Asp-12 and Asp-131.

The protein belongs to the HisA/HisF family. Heterodimer of HisH and HisF.

It localises to the cytoplasm. It catalyses the reaction 5-[(5-phospho-1-deoxy-D-ribulos-1-ylimino)methylamino]-1-(5-phospho-beta-D-ribosyl)imidazole-4-carboxamide + L-glutamine = D-erythro-1-(imidazol-4-yl)glycerol 3-phosphate + 5-amino-1-(5-phospho-beta-D-ribosyl)imidazole-4-carboxamide + L-glutamate + H(+). It functions in the pathway amino-acid biosynthesis; L-histidine biosynthesis; L-histidine from 5-phospho-alpha-D-ribose 1-diphosphate: step 5/9. Its function is as follows. IGPS catalyzes the conversion of PRFAR and glutamine to IGP, AICAR and glutamate. The HisF subunit catalyzes the cyclization activity that produces IGP and AICAR from PRFAR using the ammonia provided by the HisH subunit. The protein is Imidazole glycerol phosphate synthase subunit HisF of Paraburkholderia phytofirmans (strain DSM 17436 / LMG 22146 / PsJN) (Burkholderia phytofirmans).